We begin with the raw amino-acid sequence, 167 residues long: MKIMMILEMLFLIGMVILVVDISPYFGALGLIVVSLVGCLIILAKGNSFLSLSLLLIYLGGMMVVFSYCTALVLDLYPTVIVKEVLMKMALGVLVVVFLGYGGYLKADNGVLSMLGEGGVDNSFLGAGVLYGESWLLIVFGCLGLFLALLVILEITKSAERGAYRVI.

4 consecutive transmembrane segments (helical) span residues 24–44 (PYFG…IILA), 54–74 (LLLI…ALVL), 85–105 (VLMK…GGYL), and 135–155 (WLLI…ILEI).

Belongs to the complex I subunit 6 family.

The protein localises to the mitochondrion membrane. The catalysed reaction is a ubiquinone + NADH + 5 H(+)(in) = a ubiquinol + NAD(+) + 4 H(+)(out). Its function is as follows. Core subunit of the mitochondrial membrane respiratory chain NADH dehydrogenase (Complex I) that is believed to belong to the minimal assembly required for catalysis. Complex I functions in the transfer of electrons from NADH to the respiratory chain. The immediate electron acceptor for the enzyme is believed to be ubiquinone. The sequence is that of NADH-ubiquinone oxidoreductase chain 6 (MT-ND6) from Myxine glutinosa (Atlantic hagfish).